The following is a 308-amino-acid chain: Glutaminase (308 aa).

Substrate-binding residues include Ser-66, Asn-117, Glu-161, Asn-168, Tyr-192, Tyr-244, and Val-262.

The protein belongs to the glutaminase family. In terms of assembly, homotetramer.

It catalyses the reaction L-glutamine + H2O = L-glutamate + NH4(+). The chain is Glutaminase from Photorhabdus laumondii subsp. laumondii (strain DSM 15139 / CIP 105565 / TT01) (Photorhabdus luminescens subsp. laumondii).